Here is a 313-residue protein sequence, read N- to C-terminus: Biotin synthase (313 aa).

One can recognise a Radical SAM core domain in the interval 37-263; sequence YYGKKVKLNM…INPTKEIRIA (227 aa). The [4Fe-4S] cluster site is built by C55, C59, and C62. [2Fe-2S] cluster-binding residues include C98, C131, C191, and R261.

Belongs to the radical SAM superfamily. Biotin synthase family. Homodimer. The cofactor is [4Fe-4S] cluster. Requires [2Fe-2S] cluster as cofactor.

It catalyses the reaction (4R,5S)-dethiobiotin + (sulfur carrier)-SH + 2 reduced [2Fe-2S]-[ferredoxin] + 2 S-adenosyl-L-methionine = (sulfur carrier)-H + biotin + 2 5'-deoxyadenosine + 2 L-methionine + 2 oxidized [2Fe-2S]-[ferredoxin]. It functions in the pathway cofactor biosynthesis; biotin biosynthesis; biotin from 7,8-diaminononanoate: step 2/2. Its function is as follows. Catalyzes the conversion of dethiobiotin (DTB) to biotin by the insertion of a sulfur atom into dethiobiotin via a radical-based mechanism. This is Biotin synthase from Staphylococcus epidermidis (strain ATCC 12228 / FDA PCI 1200).